Consider the following 314-residue polypeptide: Homoserine O-acetyltransferase (314 aa).

The Acyl-thioester intermediate role is filled by cysteine 142. Residues lysine 163 and serine 192 each contribute to the substrate site. The Proton acceptor role is filled by histidine 235. Glutamate 237 is a catalytic residue. Arginine 249 contributes to the substrate binding site.

This sequence belongs to the MetA family.

It localises to the cytoplasm. It carries out the reaction L-homoserine + acetyl-CoA = O-acetyl-L-homoserine + CoA. Its pathway is amino-acid biosynthesis; L-methionine biosynthesis via de novo pathway; O-acetyl-L-homoserine from L-homoserine: step 1/1. In terms of biological role, transfers an acetyl group from acetyl-CoA to L-homoserine, forming acetyl-L-homoserine. The sequence is that of Homoserine O-acetyltransferase from Azobacteroides pseudotrichonymphae genomovar. CFP2.